Reading from the N-terminus, the 158-residue chain is MAEDLEISKGSKEEQYENLLPQIEGLLTGENNQIANLANVTAALKEQFNFFWVGFYLVDTENELVLAPFQGPIACTRIRKGRGVCGTAWQQEKTLIVPDVEKFPGHIACSSLSKSEIVLPLYKQGNIIGVLDVDSDKLNSFDEIDEKYLTQILKLLDN.

In terms of domain architecture, GAF spans 32–158 (NQIANLANVT…LTQILKLLDN (127 aa)).

The protein belongs to the free Met sulfoxide reductase family.

The polypeptide is GAF domain-containing protein A (gafA) (Dictyostelium discoideum (Social amoeba)).